A 181-amino-acid chain; its full sequence is Adenine phosphoribosyltransferase (181 aa).

The protein belongs to the purine/pyrimidine phosphoribosyltransferase family. In terms of assembly, homodimer.

It is found in the cytoplasm. It catalyses the reaction AMP + diphosphate = 5-phospho-alpha-D-ribose 1-diphosphate + adenine. It functions in the pathway purine metabolism; AMP biosynthesis via salvage pathway; AMP from adenine: step 1/1. In terms of biological role, catalyzes a salvage reaction resulting in the formation of AMP, that is energically less costly than de novo synthesis. The protein is Adenine phosphoribosyltransferase of Cytophaga hutchinsonii (strain ATCC 33406 / DSM 1761 / CIP 103989 / NBRC 15051 / NCIMB 9469 / D465).